Consider the following 124-residue polypeptide: Small ribosomal subunit protein eS6 (124 aa).

It belongs to the eukaryotic ribosomal protein eS6 family.

The protein is Small ribosomal subunit protein eS6 of Methanococcus maripaludis (strain C7 / ATCC BAA-1331).